Consider the following 248-residue polypeptide: MSNQATSEIKFVIVIATYYRKDGLTLKYLTRCLESVKKQTYTNWVVYLIGDEYENTDEFNKFATLIDTNKIIIHNKPDPERKHILDKSRLWNIAGASAMNYGLNLARSNGEKYYVHLDDDDFWESKHLENLYQAYQNYSNCIFAYTKSTYPYAHVVPNKILPREDIKSIFPNNLLPRNSNLIHSSVSFRCDIIPFDYHTTHNVSEIKGPSDAIMWDTIRQFILSNPAYCCIFIPEVTCRHDEEGSIKN.

Belongs to the glycosyltransferase 2 family.

This is an uncharacterized protein from Acanthamoeba polyphaga (Amoeba).